A 441-amino-acid chain; its full sequence is COP9 signalosome complex subunit 1 (441 aa).

Residues 1 to 28 (MERDEEASGPMMEMCTNGGEETSNRRPI) are disordered. Residues 230-400 (KYKLAARKFL…KILYARHADQ (171 aa)) form the PCI domain.

This sequence belongs to the CSN1 family. Component of the CSN complex, probably composed of CSN1, CSN2, CSN3, CSN4, CSN5 (CSN5A or CSN5B), CSN6 (CSN6A or CSN6B), CSN7 and CSN8. Interacts with itself and (via PCI domain) with CSN7 (via PCI domain). In the CSN complex, it probably interacts directly with CSN2, CSN3, CSN4 and CSN5B. Interacts with the 26S proteasome subunit RPN6. Interacts (via N-terminal domain) with TSA1 (via C-terminal domain). Binds to the translation initiation factors TIF3C1, TIF3E1 and TIF3H1. In terms of tissue distribution, expressed in leaves, flowers, immature siliques, and light-grown roots.

It is found in the cytoplasm. It localises to the nucleus. In terms of biological role, component of the COP9 signalosome complex (CSN), a complex involved in various cellular and developmental processes such as photomorphogenesis and auxin and jasmonate responses. The CSN complex is an essential regulator of the ubiquitin (Ubl) conjugation pathway by mediating the deneddylation of the cullin subunits of SCF-type E3 ligase complexes, leading to decrease the Ubl ligase activity of SCF. It is involved in repression of photomorphogenesis in darkness by regulating the activity of COP1-containing Ubl ligase complexes. The complex is also required for degradation of IAA6 by regulating the activity of the Ubl ligase SCF-TIR complex. In the complex, it plays a central role in CSN assembly. The chain is COP9 signalosome complex subunit 1 (CSN1) from Arabidopsis thaliana (Mouse-ear cress).